The following is a 379-amino-acid chain: MYHPQCELLMPLESLEMDVGQSHLAAAVAAAMPGELNFHLLHSLDAAAAAASSTAASASSQPTVDYFFGGADQQPPPPAAMQYDQLAAPHHHQTVAMLRDYYGGHYPPAAAAAAATEAYFRGGPRTAGSSSLVFGPADDESAFMVGPFESSPTPRSGGGRKRSRATAGFHGGGPANGVEKKEKQRRLRLTEKYNALMLLIPNRTKEDRATVISDAIEYIQELGRTVEELTLLVEKKRRRREMQGDVVDAATSSVVAGMDQAAESSEGEVMAAAAMGAVAPPPRQAPIRSTYIQRRSKETFVDVRIVEDDVNIKLTKRRRDGCLAAASRALDDLRLDLVHLSGGKIGDCHIYMFNTKIHSGSPVFASAVASRLIEVVDEY.

The disordered stretch occupies residues 144 to 184 (MVGPFESSPTPRSGGGRKRSRATAGFHGGGPANGVEKKEKQ). Positions 173–186 (GPANGVEKKEKQRR) are basic motif; degenerate. The 50-residue stretch at 173–222 (GPANGVEKKEKQRRLRLTEKYNALMLLIPNRTKEDRATVISDAIEYIQEL) folds into the bHLH domain. The interval 187 to 222 (LRLTEKYNALMLLIPNRTKEDRATVISDAIEYIQEL) is helix-loop-helix motif.

The protein belongs to the bHLH protein family. Homodimer. Interacts with TDR, but not with EAT1. As to expression, highly expressed in anthers; strong expression in the middle layer and tapetum, and weak expression in the endothecium.

The protein resides in the nucleus. Its function is as follows. Transcription factor that binds to the E-box-containing promoter regions of the transcription factors TDR and EAT1, activating their expression. May have a role in specifying the cell pattern of the inner anther walls and functioning in meiosis progression. Required for male reproduction. Acts downstream of UDT1 and GAMYB, but upstream of TDR1 and EAT1 in pollen development. This Oryza sativa subsp. japonica (Rice) protein is Transcription factor TIP2 (TIP2).